The primary structure comprises 156 residues: Ribosomal RNA large subunit methyltransferase H (156 aa).

Residues leucine 73, glycine 104, and leucine 123–leucine 128 contribute to the S-adenosyl-L-methionine site.

This sequence belongs to the RNA methyltransferase RlmH family. In terms of assembly, homodimer.

Its subcellular location is the cytoplasm. It catalyses the reaction pseudouridine(1915) in 23S rRNA + S-adenosyl-L-methionine = N(3)-methylpseudouridine(1915) in 23S rRNA + S-adenosyl-L-homocysteine + H(+). Its function is as follows. Specifically methylates the pseudouridine at position 1915 (m3Psi1915) in 23S rRNA. This chain is Ribosomal RNA large subunit methyltransferase H, found in Shewanella woodyi (strain ATCC 51908 / MS32).